The primary structure comprises 344 residues: MSLTYRDAGVDIDEGDRLVELIKPHARPTLRPEVLAGIGGFGGLFALDVKKYREPVLVSGTDGVGTKLKVAFAANRHDTIGIDLVAMCVNDVAVVGAEPLFFLDYFGTGKLSAEQGAEVVKGIAEGCRQAGCALIGGETAELPGFYAPGEYDLAGFAVGCVERSRIVDGKGVAPGDVVVGVASTGLHSNGYSLARKALMDRHPLDRRFDGLGGRTLGEALLEPTRIYAKDVLALLDAVPVKAFSHITGGGLPGNVPRTLPDGTRAVLEEKRWPRPAIFDLVEREGGVPRDEMYRTFNMGLGLVAVVAPGDEAAAHAALRARGLDAWTVGQIEVGTGEATCEVVR.

It belongs to the AIR synthase family.

Its subcellular location is the cytoplasm. It carries out the reaction 2-formamido-N(1)-(5-O-phospho-beta-D-ribosyl)acetamidine + ATP = 5-amino-1-(5-phospho-beta-D-ribosyl)imidazole + ADP + phosphate + H(+). The protein operates within purine metabolism; IMP biosynthesis via de novo pathway; 5-amino-1-(5-phospho-D-ribosyl)imidazole from N(2)-formyl-N(1)-(5-phospho-D-ribosyl)glycinamide: step 2/2. This is Phosphoribosylformylglycinamidine cyclo-ligase from Anaeromyxobacter sp. (strain Fw109-5).